A 310-amino-acid polypeptide reads, in one-letter code: MVKKKIAISCGDIQGIGLELILKSHKEVSVLCEPLYLIHSELLGRANQLLTNAYEVKPLNAIAINSPLPSFNSSTIGKVSAQSGAYSFESFRKACELADDKEVDSICTMPINKLAWQQAQIPFVGHTDFLKQRYKEHQIIMMLGCPKLFVGLFSDHVPLRAVSQLIQVKALVQFLLAFQKSTQAQIIQVCGFNPHAGEEGLFGEEDEKILKAIQESNQTLGFECFLGPLPADSAFAPNKRQITPFYVSMSHDVGLAPLKALYFDESINVSLNAPILRASTDHGTAFDIAYQNKANNKSYLNAIKYLSQRL.

2 residues coordinate substrate: histidine 126 and threonine 127. Positions 156, 195, and 251 each coordinate a divalent metal cation. Substrate contacts are provided by lysine 259, asparagine 268, and arginine 277.

This sequence belongs to the PdxA family. Homodimer. The cofactor is Zn(2+). It depends on Mg(2+) as a cofactor. Co(2+) is required as a cofactor.

The protein resides in the cytoplasm. The enzyme catalyses 4-(phosphooxy)-L-threonine + NAD(+) = 3-amino-2-oxopropyl phosphate + CO2 + NADH. The protein operates within cofactor biosynthesis; pyridoxine 5'-phosphate biosynthesis; pyridoxine 5'-phosphate from D-erythrose 4-phosphate: step 4/5. Its function is as follows. Catalyzes the NAD(P)-dependent oxidation of 4-(phosphooxy)-L-threonine (HTP) into 2-amino-3-oxo-4-(phosphooxy)butyric acid which spontaneously decarboxylates to form 3-amino-2-oxopropyl phosphate (AHAP). This chain is 4-hydroxythreonine-4-phosphate dehydrogenase, found in Helicobacter acinonychis (strain Sheeba).